Consider the following 446-residue polypeptide: Scytalone dehydratase-like protein Arp1 (446 aa).

Tyr-323 is a substrate binding site. Catalysis depends on residues His-358 and His-383. Residue Asn-404 coordinates substrate.

The protein belongs to the scytalone dehydratase family. As to quaternary structure, homotrimer. Each subunit contains an active site, located in the central part of the hydrophobic core of the monomer, which functions independently.

Functionally, scytalone dehydratase-like protein; part of the Pks2 gene cluster that mediates the formation of infectious structures (appressoria), enabling these fungi to kill insects faster. The product of the Pks2 gene cluster is different from the one of Pks1 and has still not been identified. The chain is Scytalone dehydratase-like protein Arp1 from Metarhizium acridum (strain CQMa 102).